The primary structure comprises 308 residues: MISVKVPASSANLGAGFDCMGVALKLYNIIEVEEIEKGLEITSSPDDPSIAKDENNLVFKAMKVVFNEVGWYPKGLRINLINEIPLTRGLGSSAACISGGIYAANLLCGGKLSEEEMIFLAAKMEGHPDNSTPAMIGGLVFAVLEENKVNYIKFVVPNRLKFAVFIPDFQLSTEYARNILPKYIEFKDAVFNVGRAALFASAITTGNYDLLPAATQDRLHQPYRKNLIPDFDKIVNLSLEFGAKGAFLSGAGPSIIALIDENYDSFEQNVKLALSSLELKSKWDLMILEADNSGATVFSVQSSSSFKR.

Residue 85–95 (PLTRGLGSSAA) coordinates ATP.

This sequence belongs to the GHMP kinase family. Homoserine kinase subfamily.

It is found in the cytoplasm. It carries out the reaction L-homoserine + ATP = O-phospho-L-homoserine + ADP + H(+). Its pathway is amino-acid biosynthesis; L-threonine biosynthesis; L-threonine from L-aspartate: step 4/5. In terms of biological role, catalyzes the ATP-dependent phosphorylation of L-homoserine to L-homoserine phosphate. The polypeptide is Homoserine kinase (Caldicellulosiruptor saccharolyticus (strain ATCC 43494 / DSM 8903 / Tp8T 6331)).